The primary structure comprises 277 residues: Undecaprenyl-diphosphatase (277 aa).

A run of 6 helical transmembrane segments spans residues 44–64 (RAMA…VWEF), 86–106 (GNLL…ADLI), 110–130 (LFNP…MLWA), 184–204 (AATE…AVYS), 215–235 (GDLP…MIAV), and 250–270 (FAWY…FGWV).

This sequence belongs to the UppP family.

The protein resides in the cell inner membrane. It catalyses the reaction di-trans,octa-cis-undecaprenyl diphosphate + H2O = di-trans,octa-cis-undecaprenyl phosphate + phosphate + H(+). Catalyzes the dephosphorylation of undecaprenyl diphosphate (UPP). Confers resistance to bacitracin. The sequence is that of Undecaprenyl-diphosphatase from Pseudomonas putida (strain ATCC 47054 / DSM 6125 / CFBP 8728 / NCIMB 11950 / KT2440).